Reading from the N-terminus, the 272-residue chain is Dermonecrotic toxin SpeSicTox-betaIB2b (272 aa).

The active site involves H5. Residues E25 and D27 each coordinate Mg(2+). H41 functions as the Nucleophile in the catalytic mechanism. 2 disulfides stabilise this stretch: C45–C51 and C47–C191. D85 is a Mg(2+) binding site.

This sequence belongs to the arthropod phospholipase D family. Class II subfamily. Requires Mg(2+) as cofactor. In terms of tissue distribution, expressed by the venom gland.

It localises to the secreted. It catalyses the reaction an N-(acyl)-sphingosylphosphocholine = an N-(acyl)-sphingosyl-1,3-cyclic phosphate + choline. The catalysed reaction is an N-(acyl)-sphingosylphosphoethanolamine = an N-(acyl)-sphingosyl-1,3-cyclic phosphate + ethanolamine. It carries out the reaction a 1-acyl-sn-glycero-3-phosphocholine = a 1-acyl-sn-glycero-2,3-cyclic phosphate + choline. The enzyme catalyses a 1-acyl-sn-glycero-3-phosphoethanolamine = a 1-acyl-sn-glycero-2,3-cyclic phosphate + ethanolamine. In terms of biological role, dermonecrotic toxins cleave the phosphodiester linkage between the phosphate and headgroup of certain phospholipids (sphingolipid and lysolipid substrates), forming an alcohol (often choline) and a cyclic phosphate. This toxin acts on sphingomyelin (SM). It may also act on ceramide phosphoethanolamine (CPE), lysophosphatidylcholine (LPC) and lysophosphatidylethanolamine (LPE), but not on lysophosphatidylserine (LPS), and lysophosphatidylglycerol (LPG). It acts by transphosphatidylation, releasing exclusively cyclic phosphate products as second products. Induces dermonecrosis, hemolysis, increased vascular permeability, edema, inflammatory response, and platelet aggregation. The chain is Dermonecrotic toxin SpeSicTox-betaIB2b from Sicarius peruensis (Six-eyed sand spider).